The chain runs to 298 residues: 4-hydroxy-tetrahydrodipicolinate synthase (298 aa).

A pyruvate-binding site is contributed by T51. Catalysis depends on Y139, which acts as the Proton donor/acceptor. K167 (schiff-base intermediate with substrate) is an active-site residue. I209 is a binding site for pyruvate.

This sequence belongs to the DapA family. In terms of assembly, homotetramer; dimer of dimers.

The protein localises to the cytoplasm. It carries out the reaction L-aspartate 4-semialdehyde + pyruvate = (2S,4S)-4-hydroxy-2,3,4,5-tetrahydrodipicolinate + H2O + H(+). The protein operates within amino-acid biosynthesis; L-lysine biosynthesis via DAP pathway; (S)-tetrahydrodipicolinate from L-aspartate: step 3/4. In terms of biological role, catalyzes the condensation of (S)-aspartate-beta-semialdehyde [(S)-ASA] and pyruvate to 4-hydroxy-tetrahydrodipicolinate (HTPA). This Pasteurella multocida (strain Pm70) protein is 4-hydroxy-tetrahydrodipicolinate synthase.